The sequence spans 276 residues: UPF0276 protein PA4106 (276 aa).

Belongs to the UPF0276 family.

This Pseudomonas aeruginosa (strain ATCC 15692 / DSM 22644 / CIP 104116 / JCM 14847 / LMG 12228 / 1C / PRS 101 / PAO1) protein is UPF0276 protein PA4106.